We begin with the raw amino-acid sequence, 85 residues long: MAHKKAGGSSRNGRDSHSKRLGVKRYGGEVIRAGGIIVRQRGTQFHPGDNVGIGRDHTLFAKVDGKIVFTIRGRLNRRTVAVIPS.

The tract at residues 1-24 (MAHKKAGGSSRNGRDSHSKRLGVK) is disordered.

It belongs to the bacterial ribosomal protein bL27 family.

This chain is Large ribosomal subunit protein bL27, found in Nitrosomonas eutropha (strain DSM 101675 / C91 / Nm57).